Reading from the N-terminus, the 22-residue chain is Brain peptide MVPVPVHHMADELLRNGPDTVI (22 aa).

This chain is Brain peptide MVPVPVHHMADELLRNGPDTVI, found in Apis mellifera (Honeybee).